Reading from the N-terminus, the 202-residue chain is LexA repressor (202 aa).

Residues 28–48 (QQEIARAFGFRSLGTVRNYLV) constitute a DNA-binding region (H-T-H motif). Catalysis depends on for autocatalytic cleavage activity residues Ser-120 and Lys-157.

This sequence belongs to the peptidase S24 family. Homodimer.

The enzyme catalyses Hydrolysis of Ala-|-Gly bond in repressor LexA.. In terms of biological role, represses a number of genes involved in the response to DNA damage (SOS response), including recA and lexA. In the presence of single-stranded DNA, RecA interacts with LexA causing an autocatalytic cleavage which disrupts the DNA-binding part of LexA, leading to derepression of the SOS regulon and eventually DNA repair. The sequence is that of LexA repressor from Syntrophotalea carbinolica (strain DSM 2380 / NBRC 103641 / GraBd1) (Pelobacter carbinolicus).